A 115-amino-acid polypeptide reads, in one-letter code: Urease subunit beta (115 aa).

This sequence belongs to the urease beta subunit family. Heterotrimer of UreA (gamma), UreB (beta) and UreC (alpha) subunits. Three heterotrimers associate to form the active enzyme.

It localises to the cytoplasm. It catalyses the reaction urea + 2 H2O + H(+) = hydrogencarbonate + 2 NH4(+). The protein operates within nitrogen metabolism; urea degradation; CO(2) and NH(3) from urea (urease route): step 1/1. The sequence is that of Urease subunit beta from Arthrobacter sp. (strain FB24).